Reading from the N-terminus, the 242-residue chain is DNA repair protein RecO (242 aa).

This sequence belongs to the RecO family.

Involved in DNA repair and RecF pathway recombination. The polypeptide is DNA repair protein RecO (Methylococcus capsulatus (strain ATCC 33009 / NCIMB 11132 / Bath)).